The sequence spans 716 residues: Protein C-mannosyl-transferase DPY19L3 (716 aa).

The Cytoplasmic segment spans residues 1 to 43 (MMYIRQRKETKPIEVSEDFPSPKEDVKLEKKLPSGCASGRFWK). Residues 44–64 (ILSSAVGGTVALCIGLLTSVY) form a helical membrane-spanning segment. Topologically, residues 65 to 154 (LATLHENDLW…RVLPIQKYLE (90 aa)) are lumenal. Asn-118 is a glycosylation site (N-linked (GlcNAc...) asparagine). The chain crosses the membrane as a helical span at residues 155–182 (PVYFYIYTLFGLQAVYVTALYITSWLLS). Residues 183–184 (GT) lie on the Cytoplasmic side of the membrane. Residues 185–197 (WLSGLLAALWYVT) constitute an intramembrane region (name=3). Residues 198–215 (NRIDTTRVEFTIPLRENW) lie on the Cytoplasmic side of the membrane. An intramembrane region (name=4) is located at residues 216 to 230 (ALPFFAIQIAAITYF). Residues 231 to 239 (LRPNLQPLS) are Cytoplasmic-facing. The helical transmembrane segment at 240–256 (ERLTLLAIFVSTFLFSL) threads the bilayer. The Lumenal segment spans residues 257–262 (TWQFNQ). The helical transmembrane segment at 263–279 (FMMLLQALVLFILDSLD) threads the bilayer. Residues 280 to 289 (MLPAMKATWL) are Cytoplasmic-facing. The chain crosses the membrane as a helical span at residues 290–306 (YGIQISCLLLVCTLQFF). The Lumenal portion of the chain corresponds to 307–308 (NS). Residues 309-323 (MILGSLLISFNLSVL) traverse the membrane as a helical segment. The Cytoplasmic portion of the chain corresponds to 324–338 (IVRKLQKNLKTGSFL). A helical membrane pass occupies residues 339 to 359 (TRIWKLLLHLLLVFCLTLFLN). Residues 360-414 (NIIKKVLNLKSDEHIFKFLKAKFGFGATRDFDANLYLCEEAFGLLPLNTFQRLSE) lie on the Lumenal side of the membrane. Residues 415-437 (TLLFYAYMFVLVVTVVTASVVAF) traverse the membrane as a helical segment. At 438–465 (HNLSDSTSLKSMDQTRKRAVDLKPEAAY) the chain is on the cytoplasmic side. A helical membrane pass occupies residues 466–485 (NLIHTILFGVLALSTMRMKY). Residues 486–487 (LW) are Lumenal-facing. Residues 488–499 (TSHMCVFASFGL) traverse the membrane as a helical segment. At 500 to 522 (CSSEVWELLLRLVHLCNPKRIWV) the chain is on the cytoplasmic side. The helical transmembrane segment at 523 to 539 (LRYLVPVLTLLYLCYKS) threads the bilayer. Over 540–716 (WPGVMDELSE…FHVYKLSRNK (177 aa)) the chain is Lumenal. N-linked (GlcNAc...) asparagine glycosylation is present at Asn-704.

Belongs to the dpy-19 family.

The protein localises to the endoplasmic reticulum membrane. The catalysed reaction is L-tryptophyl-[protein] + a di-trans,poly-cis-dolichyl beta-D-mannosyl phosphate = C-alpha-D-mannosyl-L-tryptophyl-[protein] + a di-trans,poly-cis-dolichyl phosphate + H(+). The protein operates within protein modification; protein glycosylation. C-mannosyltransferase that mediates C-mannosylation of tryptophan residues on target proteins. The reaction occurs on the luminal side of the endoplasmic reticulum and involves the transfer of a mannose unit from a dolichylphosphate mannose (Dol-P-Man) donor to an acceptor protein containing a WxxW or WxxC consensus sequence. C-mannosylates RSPO1, a Wnt signaling regulator, preferentially at the first Trp residue in the sequence WxxW. C-mannosylates the netrin receptor UNC5A, preferentially at the third tryptophan of WxxWxxWxxC sequence. The polypeptide is Protein C-mannosyl-transferase DPY19L3 (Dpy19l3) (Mus musculus (Mouse)).